The chain runs to 441 residues: MDIKNMIINNPLIKNMIDKKEVGWTNPKEMNYTEYEKKLPLKDQELKEAEERLKRFAPFIKKVFPETEETYGIIESPLEEIFNMQKELEKKYHTEILGKLYLKMDSHLPVAGSIKARGGVYEVLKHAEELAMEAGLLKLEDDYSILADKKFKDFFSKYKIQVGSTGNLGLSIGITSAALGFQVIVHMSADAKKWKKDMLRSKGVQVIEYESDYGKAVEEGRKNSDADPMSYFVDDEKSMNLFLGYTVAASRIKKQFDKKGIVINKEHPLIVYIPCGVGGAPGGVAYGLKRIFKENVYIFFVEPVLAPCMLLGMQTGLHEKISVYDVGIHGITHADGLAVARPSGLVGRLMEPILSGIFTVDDYKLYDYLRILNETENKRIEPSSCAAFEGVVSLLKYEDSKKYIENRIGKNINNVYHVCWATGGKMVPQEDMEIFLNTYLK.

At Lys115 the chain carries N6-(pyridoxal phosphate)lysine.

This sequence belongs to the serine/threonine dehydratase family. DsdA subfamily. Pyridoxal 5'-phosphate is required as a cofactor.

The catalysed reaction is D-serine = pyruvate + NH4(+). The polypeptide is Probable D-serine dehydratase (Fusobacterium nucleatum subsp. nucleatum (strain ATCC 25586 / DSM 15643 / BCRC 10681 / CIP 101130 / JCM 8532 / KCTC 2640 / LMG 13131 / VPI 4355)).